The following is a 332-amino-acid chain: Anthranilate phosphoribosyltransferase (332 aa).

5-phospho-alpha-D-ribose 1-diphosphate-binding positions include glycine 79, 82–83, serine 87, 89–92, 107–115, and serine 119; these read GD, NIST, and KHGNRSVSS. Glycine 79 contributes to the anthranilate binding site. Residue serine 91 coordinates Mg(2+). Position 110 (asparagine 110) interacts with anthranilate. Residue arginine 165 participates in anthranilate binding. The Mg(2+) site is built by aspartate 223 and glutamate 224.

The protein belongs to the anthranilate phosphoribosyltransferase family. In terms of assembly, homodimer. Mg(2+) serves as cofactor.

It carries out the reaction N-(5-phospho-beta-D-ribosyl)anthranilate + diphosphate = 5-phospho-alpha-D-ribose 1-diphosphate + anthranilate. The protein operates within amino-acid biosynthesis; L-tryptophan biosynthesis; L-tryptophan from chorismate: step 2/5. Catalyzes the transfer of the phosphoribosyl group of 5-phosphorylribose-1-pyrophosphate (PRPP) to anthranilate to yield N-(5'-phosphoribosyl)-anthranilate (PRA). This chain is Anthranilate phosphoribosyltransferase, found in Photorhabdus laumondii subsp. laumondii (strain DSM 15139 / CIP 105565 / TT01) (Photorhabdus luminescens subsp. laumondii).